Consider the following 378-residue polypeptide: S-(hydroxymethyl)glutathione dehydrogenase (378 aa).

Residues C49, H71, C101, C104, C107, C115, and C178 each coordinate Zn(2+).

Belongs to the zinc-containing alcohol dehydrogenase family. Class-III subfamily. In terms of assembly, homodimer. It depends on Zn(2+) as a cofactor.

It localises to the cytoplasm. It catalyses the reaction S-(hydroxymethyl)glutathione + NADP(+) = S-formylglutathione + NADPH + H(+). The enzyme catalyses S-(hydroxymethyl)glutathione + NAD(+) = S-formylglutathione + NADH + H(+). The catalysed reaction is a primary alcohol + NAD(+) = an aldehyde + NADH + H(+). It carries out the reaction a secondary alcohol + NAD(+) = a ketone + NADH + H(+). It catalyses the reaction S-nitrosoglutathione + NADH + H(+) = S-(hydroxysulfenamide)glutathione + NAD(+). Has high formaldehyde dehydrogenase activity in the presence of glutathione and catalyzes the oxidation of normal alcohols in a reaction that is not GSH-dependent. In addition, hemithiolacetals other than those formed from GSH, including omega-thiol fatty acids, also are substrates. Also acts as a S-nitroso-glutathione reductase by catalyzing the NADH-dependent reduction of S-nitrosoglutathione. This chain is S-(hydroxymethyl)glutathione dehydrogenase (frmA), found in Haemophilus influenzae (strain ATCC 51907 / DSM 11121 / KW20 / Rd).